Consider the following 379-residue polypeptide: Cytochrome b (379 aa).

4 helical membrane passes run 33–53 (FGSL…FLAM), 77–98 (WLIR…FIHV), 113–133 (WNIG…GYVL), and 178–198 (FFAF…VHLL). Residues His-83 and His-97 each coordinate heme b. Positions 182 and 196 each coordinate heme b. His-201 is a binding site for a ubiquinone. The next 4 membrane-spanning stretches (helical) occupy residues 226–246 (IKDL…ALFF), 288–308 (LGGV…PLLN), 320–340 (VTQT…WIGG), and 347–367 (FTTI…ILIP).

Belongs to the cytochrome b family. As to quaternary structure, the cytochrome bc1 complex contains 11 subunits: 3 respiratory subunits (MT-CYB, CYC1 and UQCRFS1), 2 core proteins (UQCRC1 and UQCRC2) and 6 low-molecular weight proteins (UQCRH/QCR6, UQCRB/QCR7, UQCRQ/QCR8, UQCR10/QCR9, UQCR11/QCR10 and a cleavage product of UQCRFS1). This cytochrome bc1 complex then forms a dimer. It depends on heme b as a cofactor.

The protein localises to the mitochondrion inner membrane. Functionally, component of the ubiquinol-cytochrome c reductase complex (complex III or cytochrome b-c1 complex) that is part of the mitochondrial respiratory chain. The b-c1 complex mediates electron transfer from ubiquinol to cytochrome c. Contributes to the generation of a proton gradient across the mitochondrial membrane that is then used for ATP synthesis. The polypeptide is Cytochrome b (MT-CYB) (Akodon lindberghi (Lindbergh's grass mouse)).